Here is a 310-residue protein sequence, read N- to C-terminus: Putative F-box protein PP2-B2 (310 aa).

Residues 1-34 (MIQSTMGHKQSVDSRGKGRKVPGSSSMVQKHRVE) are disordered. The 47-residue stretch at 44–90 (PSLFDNLPEDCISNIISFTSPRDACVAASVSKTFESAVNSDSVWDKF) folds into the F-box domain.

The polypeptide is Putative F-box protein PP2-B2 (PP2B2) (Arabidopsis thaliana (Mouse-ear cress)).